A 943-amino-acid polypeptide reads, in one-letter code: Isoleucine--tRNA ligase (943 aa).

A 'HIGH' region motif is present at residues 59–69 (PYANGQIHLGH). L-isoleucyl-5'-AMP is bound at residue Glu-577. The short motif at 618–622 (KMSKS) is the 'KMSKS' region element. ATP is bound at residue Lys-621. 4 residues coordinate Zn(2+): Cys-906, Cys-909, Cys-926, and Cys-929.

It belongs to the class-I aminoacyl-tRNA synthetase family. IleS type 1 subfamily. Monomer. The cofactor is Zn(2+).

It localises to the cytoplasm. The enzyme catalyses tRNA(Ile) + L-isoleucine + ATP = L-isoleucyl-tRNA(Ile) + AMP + diphosphate. In terms of biological role, catalyzes the attachment of isoleucine to tRNA(Ile). As IleRS can inadvertently accommodate and process structurally similar amino acids such as valine, to avoid such errors it has two additional distinct tRNA(Ile)-dependent editing activities. One activity is designated as 'pretransfer' editing and involves the hydrolysis of activated Val-AMP. The other activity is designated 'posttransfer' editing and involves deacylation of mischarged Val-tRNA(Ile). The sequence is that of Isoleucine--tRNA ligase from Xylella fastidiosa (strain M12).